We begin with the raw amino-acid sequence, 342 residues long: MATLTETITSLAQPFVHLEDTINSPPVKETIRPRNDTTITPPPTQWSYLCHPRVKEVQDEVDGYFLENWKFPSFKAVRTFLGAKFSEVTCLYFPLALDDRIHFACRLLTVLFLIDDVLEHMSFADGEAYNNRLIPISRGDVLPDRTKPEEFILYDLWESMRAHDAELANEVLEPTFVFMRAQTDRARLTIHELGHYLEYREKDVGKALLSALMRFSMGLRFSADELQGMKALEANCAKQLSVVNDIYSYDKEEEASRTGHKEGAFLCSAVKVLAEESKLGIPATKRVLWSMTREWETVHDEIVAEKIASPDGCSEAAKAYMKGLEYQMSGNEQWSKTTRRYN.

Mg(2+) is bound by residues D115, N244, S248, and E252. (2E,6E)-farnesyl diphosphate contacts are provided by R340 and Y341.

This sequence belongs to the terpene synthase family. As to quaternary structure, homodimer. The cofactor is Mg(2+).

It carries out the reaction (2E,6E)-farnesyl diphosphate = (+)-aristolochene + diphosphate. It functions in the pathway sesquiterpene biosynthesis; aristolochene biosynthesis; aristolochene from farnesyl diphosphate: step 1/1. Aristolochene synthase; part of the gene cluster that mediates the biosynthesis of PR-toxin, a bicyclic sesquiterpene belonging to the eremophilane class and acting as a mycotoxin. The first step of the pathway is catalyzed by the aristolochene synthase which performs the cyclization of trans,trans-farnesyl diphosphate (FPP) to the bicyclic sesquiterpene aristolochene. Following the formation of aristolochene, the non-oxygenated aristolochene is converted to the trioxygenated intermediate eremofortin B, via 7-epi-neopetasone. This conversion appears to involve three enzymes, a hydroxysterol oxidase-like enzyme, the quinone-oxidase prx3 that forms the quinone-type-structure in the bicyclic nucleus of aristolochene with the C8-oxo group and the C-3 hydroxyl group, and the P450 monooxygenase prx9 that introduces the epoxide at the double bond between carbons 1 and 2. No monoxy or dioxy-intermediates have been reported to be released to the broth, so these three early oxidative reactions may be coupled together. Eremofortin B is further oxidized by another P450 monooxygenase, that introduces a second epoxide between carbons 7 and 11 prior to acetylation to eremofortin A by the acetyltransferase prx11. The second epoxidation may be performed by a second P450 monooxygenase. After the acetylation step, the conversion of eremofortin A to eremofortin C and then to PR-toxin requires only two enzymes. First the conversion of eremofortin A to eremofortin C proceeds by oxidation of the side chain of the molecule at C-12 and is catalyzed by the short-chain oxidoreductase prx1. The cytochrome P450 monooxygenase prx8 also plays a role in this step. The primary alcohol formed at C-12 is finally oxidized by the short-chain alcohol dehydrogenase prx4 that forms PR-toxin. This Penicillium rubens (strain ATCC 28089 / DSM 1075 / NRRL 1951 / Wisconsin 54-1255) (Penicillium chrysogenum) protein is Aristolochene synthase prx2.